The primary structure comprises 667 residues: Probable potassium transport system protein Kup (667 aa).

The next 12 membrane-spanning stretches (helical) occupy residues Gly-5–Met-25, Ile-47–Leu-67, Ala-88–Leu-108, Val-133–Ile-153, Ala-164–Ile-184, Ala-210–Ser-230, Ser-243–Leu-263, Leu-287–Gly-307, Ile-336–Phe-356, Gly-367–Leu-387, Leu-393–Ser-413, and Gly-420–Phe-440.

This sequence belongs to the HAK/KUP transporter (TC 2.A.72) family.

It localises to the cell membrane. It catalyses the reaction K(+)(in) + H(+)(in) = K(+)(out) + H(+)(out). In terms of biological role, transport of potassium into the cell. Likely operates as a K(+):H(+) symporter. The sequence is that of Probable potassium transport system protein Kup from Lactobacillus delbrueckii subsp. bulgaricus (strain ATCC 11842 / DSM 20081 / BCRC 10696 / JCM 1002 / NBRC 13953 / NCIMB 11778 / NCTC 12712 / WDCM 00102 / Lb 14).